Consider the following 166-residue polypeptide: ATP synthase subunit b (166 aa).

Residues 7–27 (QFSLGLFILQIILFVGLILLL) form a helical membrane-spanning segment.

This sequence belongs to the ATPase B chain family. In terms of assembly, F-type ATPases have 2 components, F(1) - the catalytic core - and F(0) - the membrane proton channel. F(1) has five subunits: alpha(3), beta(3), gamma(1), delta(1), epsilon(1). F(0) has three main subunits: a(1), b(2) and c(10-14). The alpha and beta chains form an alternating ring which encloses part of the gamma chain. F(1) is attached to F(0) by a central stalk formed by the gamma and epsilon chains, while a peripheral stalk is formed by the delta and b chains.

The protein resides in the cell inner membrane. Its function is as follows. F(1)F(0) ATP synthase produces ATP from ADP in the presence of a proton or sodium gradient. F-type ATPases consist of two structural domains, F(1) containing the extramembraneous catalytic core and F(0) containing the membrane proton channel, linked together by a central stalk and a peripheral stalk. During catalysis, ATP synthesis in the catalytic domain of F(1) is coupled via a rotary mechanism of the central stalk subunits to proton translocation. Component of the F(0) channel, it forms part of the peripheral stalk, linking F(1) to F(0). The sequence is that of ATP synthase subunit b from Flavobacterium psychrophilum (strain ATCC 49511 / DSM 21280 / CIP 103535 / JIP02/86).